Reading from the N-terminus, the 148-residue chain is NADH-ubiquinone oxidoreductase chain 3 (148 aa).

3 consecutive transmembrane segments (helical) span residues 19-39, 70-90, and 99-119; these read FYMI…YIIT, FILI…ILPY, and IYGL…FIIE.

This sequence belongs to the complex I subunit 3 family.

The protein resides in the mitochondrion membrane. The enzyme catalyses a ubiquinone + NADH + 5 H(+)(in) = a ubiquinol + NAD(+) + 4 H(+)(out). Core subunit of the mitochondrial membrane respiratory chain NADH dehydrogenase (Complex I) that is believed to belong to the minimal assembly required for catalysis. Complex I functions in the transfer of electrons from NADH to the respiratory chain. The immediate electron acceptor for the enzyme is believed to be ubiquinone. The polypeptide is NADH-ubiquinone oxidoreductase chain 3 (ND3) (Wickerhamomyces canadensis (Yeast)).